Reading from the N-terminus, the 177-residue chain is Outer membrane lipoprotein Blc (177 aa).

The signal sequence occupies residues 1–18; sequence MRILPVVAAVTAAFLVVA. Cysteine 19 is lipidated: N-palmitoyl cysteine. Residue cysteine 19 is the site of S-diacylglycerol cysteine attachment.

The protein belongs to the calycin superfamily. Lipocalin family. Homodimer.

The protein resides in the cell outer membrane. Functionally, involved in the storage or transport of lipids necessary for membrane maintenance under stressful conditions. Displays a binding preference for lysophospholipids. This is Outer membrane lipoprotein Blc from Citrobacter freundii.